Consider the following 34-residue polypeptide: Photosystem II reaction center protein T (34 aa).

The chain crosses the membrane as a helical span at residues 3-23; that stretch reads ALVYTFLLVSTLGIIFFAIFF.

Belongs to the PsbT family. In terms of assembly, PSII is composed of 1 copy each of membrane proteins PsbA, PsbB, PsbC, PsbD, PsbE, PsbF, PsbH, PsbI, PsbJ, PsbK, PsbL, PsbM, PsbT, PsbY, PsbZ, Psb30/Ycf12, at least 3 peripheral proteins of the oxygen-evolving complex and a large number of cofactors. It forms dimeric complexes.

Its subcellular location is the plastid. It localises to the chloroplast thylakoid membrane. Its function is as follows. Found at the monomer-monomer interface of the photosystem II (PS II) dimer, plays a role in assembly and dimerization of PSII. PSII is a light-driven water plastoquinone oxidoreductase, using light energy to abstract electrons from H(2)O, generating a proton gradient subsequently used for ATP formation. The protein is Photosystem II reaction center protein T of Solanum bulbocastanum (Wild potato).